A 387-amino-acid polypeptide reads, in one-letter code: Acetate kinase (387 aa).

Asn-14 contributes to the Mg(2+) binding site. Lys-21 is a binding site for ATP. Arg-80 is a substrate binding site. The Proton donor/acceptor role is filled by Asp-137. ATP-binding positions include 197–201 (HLGNG), 271–273 (DFR), and 319–323 (GIGEN). Residue Glu-373 coordinates Mg(2+).

Belongs to the acetokinase family. In terms of assembly, homodimer. The cofactor is Mg(2+). Mn(2+) serves as cofactor.

Its subcellular location is the cytoplasm. The catalysed reaction is acetate + ATP = acetyl phosphate + ADP. It participates in metabolic intermediate biosynthesis; acetyl-CoA biosynthesis; acetyl-CoA from acetate: step 1/2. Functionally, catalyzes the formation of acetyl phosphate from acetate and ATP. Can also catalyze the reverse reaction. This chain is Acetate kinase, found in Mycobacterium avium (strain 104).